The following is an 830-amino-acid chain: uncharacterized protein (830 aa).

Disordered stretches follow at residues 1-28 (MGVQ…DSIC), 70-147 (RRAN…GNFA), and 186-210 (AASP…SKSL). The segment covering 10–27 (NSKNWLRQPDQQPIQDSI) has biased composition (polar residues). Low complexity-rich tracts occupy residues 100–130 (QKSS…SIQS) and 186–199 (AASP…ASTS). The span at 200 to 210 (ENLTPTSSKSL) shows a compositional bias: polar residues. 10 helical membrane passes run 505 to 525 (WLVA…VYGG), 529 to 549 (DMLI…YINP), 551 to 571 (FFLF…FLGR), 584 to 604 (FCFA…YVVF), 622 to 642 (MLYA…GSAL), 659 to 679 (IIAV…LSLL), 691 to 711 (IQMF…LHFG), 715 to 735 (ISSA…SHFI), 740 to 760 (FAVV…AQGG), and 802 to 822 (IAIG…PFFG).

It belongs to the ThrE exporter (TC 2.A.79) family.

Its subcellular location is the cell membrane. It is found in the cell tip. This is an uncharacterized protein from Schizosaccharomyces pombe (strain 972 / ATCC 24843) (Fission yeast).